The sequence spans 353 residues: Divinyl chlorophyll a/b light-harvesting protein PcbG (353 aa).

6 consecutive transmembrane segments (helical) span residues 28-48 (FISS…ANTL), 64-84 (GLVV…NGVF), 90-110 (LLVV…GGML), 204-224 (IMGG…FHIL), 244-264 (FVLS…ALWC), and 308-328 (LTNV…FHGL).

The protein belongs to the PsbB/PsbC family. IsiA/Pcb subfamily. The antenna complex consists of divinyl chlorophylls (a and b) and divinyl chlorophyll a/b binding proteins and binds more divinyl chlorophyll b than does the antenna complex from high-light-adapted Prochlorococcus. Also forms complexes with PSI, consisting of a PSI trimer with surrounded by a PcbG ring (probably with 18 subunits). Is the only subunit found in this ring under iron-replete conditions. Divinyl chlorophyll a is required as a cofactor. Requires divinyl chlorophyll b as cofactor.

Its subcellular location is the cellular thylakoid membrane. The antenna complex functions as a light receptor, it captures and delivers excitation energy to photosystems I. The Prochlorales pcb genes are not related to higher plant LHCs. This is Divinyl chlorophyll a/b light-harvesting protein PcbG (pcbG) from Prochlorococcus marinus (strain SARG / CCMP1375 / SS120).